We begin with the raw amino-acid sequence, 726 residues long: Replication restart protein PriA (726 aa).

Ile234 is a binding site for ATP. The Helicase ATP-binding domain maps to 234–373 (IQSVLYKGVQ…LHRKCFYIKL (140 aa)). A DEAH box motif is present at residues 316–319 (LEEH). Residues Cys431, Cys434, Cys440, Cys443, Cys458, Cys461, Cys471, and Cys474 each contribute to the Zn(2+) site.

The protein belongs to the helicase family. PriA subfamily. As to quaternary structure, component of the replication restart primosome. It depends on Zn(2+) as a cofactor.

It catalyses the reaction Couples ATP hydrolysis with the unwinding of duplex DNA by translocating in the 3'-5' direction.. It carries out the reaction ATP + H2O = ADP + phosphate + H(+). In terms of biological role, initiates the restart of stalled replication forks, which reloads the replicative helicase on sites other than the origin of replication. Recognizes and binds to abandoned replication forks and remodels them to uncover a helicase loading site. Promotes assembly of the primosome at these replication forks. This is Replication restart protein PriA from Buchnera aphidicola subsp. Acyrthosiphon pisum (strain APS) (Acyrthosiphon pisum symbiotic bacterium).